We begin with the raw amino-acid sequence, 280 residues long: Probable cell division protein WhiA (280 aa).

Residues 246 to 279 constitute a DNA-binding region (H-T-H motif); sequence SLEQIAQFFERKYKVQITRSGIQHLNAKLKKLNQ.

It belongs to the WhiA family.

In terms of biological role, involved in cell division and chromosome segregation. This is Probable cell division protein WhiA from Mycoplasma pneumoniae (strain ATCC 29342 / M129 / Subtype 1) (Mycoplasmoides pneumoniae).